The following is a 71-amino-acid chain: Conotoxin De13.1 (71 aa).

Positions 1 to 19 (MSGMGVLLLVLLLVMPLAA) are cleaved as a signal peptide. The propeptide occupies 20-35 (FHQDGEGEATRRSGGL). 2 positions are modified to 4-hydroxyproline: Pro40 and Pro44. At Trp51 the chain carries 6'-bromotryptophan. At Glu52 the chain carries 4-carboxyglutamate. At Lys55 the chain carries 5-hydroxylysine. Residue Pro58 is modified to 4-hydroxyproline. His69 is subject to Histidine amide.

This sequence belongs to the conotoxin G superfamily. Contains 4 disulfide bonds. Expressed by the venom duct.

It localises to the secreted. The sequence is that of Conotoxin De13.1 from Conasprella delessertii (Sozon's cone).